Reading from the N-terminus, the 246-residue chain is Uridylate kinase (246 aa).

Residue 20 to 23 (KISG) participates in ATP binding. Positions 28–33 (GDQGYG) are involved in allosteric activation by GTP. Residue G62 coordinates UMP. ATP-binding residues include G63 and R67. UMP is bound by residues D82 and 143–150 (TGNPYFTT). ATP-binding residues include T170, Y176, and D179.

Belongs to the UMP kinase family. In terms of assembly, homohexamer.

It is found in the cytoplasm. It catalyses the reaction UMP + ATP = UDP + ADP. It functions in the pathway pyrimidine metabolism; CTP biosynthesis via de novo pathway; UDP from UMP (UMPK route): step 1/1. With respect to regulation, allosterically activated by GTP. Inhibited by UTP. Functionally, catalyzes the reversible phosphorylation of UMP to UDP. This chain is Uridylate kinase, found in Cereibacter sphaeroides (strain ATCC 17029 / ATH 2.4.9) (Rhodobacter sphaeroides).